The chain runs to 403 residues: MIQLRQLSDVIVKDKVVLLRLDLNIPQEGGKITDNTRIVRTIPTIKYLILHGAKVVIISHLGNPKGRIELTLSLRSVVTELEALLNIKVQFCPESIGATPKNAIINMKAGEVLLLENLRFNSGEELNDATFINELGSSGDIYVNDAFSCSHRKHASICGLPTKLPSAAGFLLLSELKHLTSIFSNANKPFTVIIGGAKMSTKLDLLNSLITKADYLIVAGAMANIFLAMKRFNIGASLYKPELINVASLILKKATSTNCKIILPFDAVIQNFNSNNITILELNSSLVMQSNAKIMDIGPQTIAQIINIIKISKTVVWNGPVGAFEQTPFDYGSTYLSKAIAEKTRTGSLCSIAGGGDTISAIKKSGVIDDFSYISTGGGAFLEWLQGKTLPGVEALMQKFRYS.

Substrate-binding positions include 22–24, R37, 60–63, R119, and R152; these read DLN and HLGN. ATP is bound by residues K202, E325, and 355–358; that span reads GGDT.

It belongs to the phosphoglycerate kinase family. As to quaternary structure, monomer.

The protein resides in the cytoplasm. It catalyses the reaction (2R)-3-phosphoglycerate + ATP = (2R)-3-phospho-glyceroyl phosphate + ADP. It functions in the pathway carbohydrate degradation; glycolysis; pyruvate from D-glyceraldehyde 3-phosphate: step 2/5. The chain is Phosphoglycerate kinase from Orientia tsutsugamushi (strain Boryong) (Rickettsia tsutsugamushi).